We begin with the raw amino-acid sequence, 293 residues long: Elongation factor Ts (293 aa).

The interval 80–83 (TDFV) is involved in Mg(2+) ion dislocation from EF-Tu.

Belongs to the EF-Ts family.

The protein resides in the cytoplasm. Associates with the EF-Tu.GDP complex and induces the exchange of GDP to GTP. It remains bound to the aminoacyl-tRNA.EF-Tu.GTP complex up to the GTP hydrolysis stage on the ribosome. The chain is Elongation factor Ts from Burkholderia multivorans (strain ATCC 17616 / 249).